The sequence spans 235 residues: Phosphoribosylaminoimidazole-succinocarboxamide synthase (235 aa).

It belongs to the SAICAR synthetase family.

The enzyme catalyses 5-amino-1-(5-phospho-D-ribosyl)imidazole-4-carboxylate + L-aspartate + ATP = (2S)-2-[5-amino-1-(5-phospho-beta-D-ribosyl)imidazole-4-carboxamido]succinate + ADP + phosphate + 2 H(+). It functions in the pathway purine metabolism; IMP biosynthesis via de novo pathway; 5-amino-1-(5-phospho-D-ribosyl)imidazole-4-carboxamide from 5-amino-1-(5-phospho-D-ribosyl)imidazole-4-carboxylate: step 1/2. The sequence is that of Phosphoribosylaminoimidazole-succinocarboxamide synthase from Sulfolobus acidocaldarius (strain ATCC 33909 / DSM 639 / JCM 8929 / NBRC 15157 / NCIMB 11770).